A 349-amino-acid polypeptide reads, in one-letter code: uncharacterized protein (349 aa).

This is an uncharacterized protein from Ostreid herpesvirus 1 (isolate France) (OsHV-1).